Consider the following 196-residue polypeptide: MKLIIATHNPGKVKELEGMLTPLGFEVESLLDYPDAPETDETGTTFEENAALKATEAAAYFGHAVLADDSGLEVDALDGAPGVYSARFAGPEKSDEANNALLLEKLNGETNRTARFVCALCLAKPSGETLTVRGTIEGTIGYSPQGENGFGYDPLFIVPSLHKTAAELERDEKAVVSHRGQALRKLEAEIIPFMKG.

7-12 (THNPGK) serves as a coordination point for substrate. 2 residues coordinate Mg(2+): aspartate 40 and aspartate 69. Residue aspartate 69 is the Proton acceptor of the active site. Substrate is bound by residues serine 70, 150-153 (FGYD), lysine 173, and 178-179 (HR).

It belongs to the HAM1 NTPase family. As to quaternary structure, homodimer. Mg(2+) serves as cofactor.

It carries out the reaction XTP + H2O = XMP + diphosphate + H(+). The catalysed reaction is dITP + H2O = dIMP + diphosphate + H(+). The enzyme catalyses ITP + H2O = IMP + diphosphate + H(+). Pyrophosphatase that catalyzes the hydrolysis of nucleoside triphosphates to their monophosphate derivatives, with a high preference for the non-canonical purine nucleotides XTP (xanthosine triphosphate), dITP (deoxyinosine triphosphate) and ITP. Seems to function as a house-cleaning enzyme that removes non-canonical purine nucleotides from the nucleotide pool, thus preventing their incorporation into DNA/RNA and avoiding chromosomal lesions. In Exiguobacterium sp. (strain ATCC BAA-1283 / AT1b), this protein is dITP/XTP pyrophosphatase.